Reading from the N-terminus, the 281-residue chain is Transcription factor HES-1 (281 aa).

The interval 1 to 44 is disordered; sequence MPADIMEKNSSSPVAATPASVNTTPDKPKTASEHRKSSKPIMEK. Residues 10–21 are compositionally biased toward low complexity; the sequence is SSSPVAATPASV. Residues 26 to 35 show a composition bias toward basic and acidic residues; sequence DKPKTASEHR. The region spanning 34-91 is the bHLH domain; it reads HRKSSKPIMEKRRRARINESLSQLKTLILDALKKDSSRHSKLEKADILEMTVKHLRNL. The 34-residue stretch at 110–143 folds into the Orange domain; sequence YRAGFSECMNEVTRFLSTCEGVNTEVRTRLLGHL. Disordered stretches follow at residues 158 to 206 and 255 to 281; these read QAHP…PCKL and TSVG…PWRN. Composition is skewed to pro residues over residues 164–174 and 182–201; these read QAPPPPPPSGP and FAPP…PPGS. Positions 255 to 272 are enriched in polar residues; the sequence is TSVGPNAVSPSSGSSLTA. Positions 276 to 279 match the WRPW motif motif; the sequence is WRPW.

As to quaternary structure, interacts with SIRT1. Interacts weakly with TLE2. Interacts with HES6. Transcription repression requires formation of a complex with a corepressor protein of the Groucho/TLE family. Interacts (via WPRW motif) with TLE1. Interacts with an FA complex, composed of FANCA, FANCF, FANCG and FANCL, but not of FANCC, nor FANCE. Present in all tissues examined but highest in epithelial cells and in mesoderm-derived tissues such as embryonal muscle cells.

Its subcellular location is the nucleus. Transcriptional repressor of genes that require a bHLH protein for their transcription. May act as a negative regulator of myogenesis by inhibiting the functions of MYOD1 and ASH1. Binds DNA on N-box motifs: 5'-CACNAG-3' with high affinity and on E-box motifs: 5'-CANNTG-3' with low affinity. May play a role in a functional FA core complex response to DNA cross-link damage, being required for the stability and nuclear localization of FA core complex proteins, as well as for FANCD2 monoubiquitination in response to DNA damage. The polypeptide is Transcription factor HES-1 (Hes1) (Rattus norvegicus (Rat)).